A 444-amino-acid polypeptide reads, in one-letter code: Pineal opsin (444 aa).

Positions 1–20 (MDALQESPPSHHSLPSALPS) are disordered. Topologically, residues 1 to 46 (MDALQESPPSHHSLPSALPSATGGNGTVATMHNPFERPLEGIAPWN) are extracellular. Low complexity predominate over residues 7–20 (SPPSHHSLPSALPS). A glycan (N-linked (GlcNAc...) asparagine) is linked at N25. The helical transmembrane segment at 47–71 (FTMLAALMGTITALSLGENFAVIVV) threads the bilayer. Residues 72 to 83 (TARFRQLRQPLN) are Cytoplasmic-facing. The helical transmembrane segment at 84–108 (YVLVNLAAADLLVSAIGGSVSFFTN) threads the bilayer. Residues 109-123 (IKGYFFLGVHACVLE) lie on the Extracellular side of the membrane. Cysteines 120 and 197 form a disulfide. Residues 124-143 (GFAVTYFGVVALWSLALLAF) form a helical membrane-spanning segment. Residues 144-162 (ERYFVICRPLGNFRLQSKH) are Cytoplasmic-facing. The chain crosses the membrane as a helical span at residues 163–186 (AVLGLAVVWVFSLACTLPPVLGWS). Over 187–210 (SYRPSMIGTTCEPNWYSGELHDHT) the chain is Extracellular. The helical transmembrane segment at 211–238 (FILMFFSTCFIFPLAVIFFSYGKLIQKL) threads the bilayer. Topologically, residues 239–260 (KKASETQRGLESTRRAEQQVTR) are cytoplasmic. Residues 261 to 284 (MVVVMILAFLVCWMPYATFSIVVT) form a helical membrane-spanning segment. Residues 285 to 292 (ACPTIHLD) lie on the Extracellular side of the membrane. The chain crosses the membrane as a helical span at residues 293-317 (PLLAAVPAFFSKTATVYNPVIYIFM). Position 304 is an N6-(retinylidene)lysine (K304). Residues 318–444 (NKQFRDCFVQ…SESVSKICPV (127 aa)) are Cytoplasmic-facing. C331 carries S-palmitoyl cysteine lipidation. 2 disordered regions span residues 341-360 (QTAG…QSPG) and 388-420 (EPTM…QQGT). Low complexity predominate over residues 409-419 (QQQGQQQQQQG).

Belongs to the G-protein coupled receptor 1 family. Opsin subfamily. In terms of processing, phosphorylated on some or all of the serine and threonine residues present in the C-terminal region. In terms of tissue distribution, pineal gland.

It is found in the membrane. The polypeptide is Pineal opsin (Petromyzon marinus (Sea lamprey)).